A 278-amino-acid chain; its full sequence is Elongation factor Ts (278 aa).

The segment at 79–82 (TDFV) is involved in Mg(2+) ion dislocation from EF-Tu.

The protein belongs to the EF-Ts family.

It localises to the cytoplasm. Its function is as follows. Associates with the EF-Tu.GDP complex and induces the exchange of GDP to GTP. It remains bound to the aminoacyl-tRNA.EF-Tu.GTP complex up to the GTP hydrolysis stage on the ribosome. This chain is Elongation factor Ts, found in Borrelia recurrentis (strain A1).